We begin with the raw amino-acid sequence, 274 residues long: Ceramide synthase (274 aa).

The 228-residue stretch at 34–261 folds into the TLC domain; that stretch reads ADAVIVSARL…ICRGACRLFW (228 aa). 4 helical membrane passes run 130-150, 159-179, 194-214, and 223-243; these read FLMV…SVVW, LGCM…KILI, ALML…LYWA, and LLAV…LLLA.

In terms of tissue distribution, expressed in testis. Expressed in the retina with higher expression levels in the macular than in the peripheral region.

It is found in the golgi apparatus membrane. The protein localises to the endoplasmic reticulum membrane. It catalyses the reaction sphing-4-enine + octadecanoyl-CoA = N-octadecanoylsphing-4-enine + CoA + H(+). The enzyme catalyses eicosanoyl-CoA + sphing-4-enine = N-eicosanoyl-sphing-4-enine + CoA + H(+). The catalysed reaction is sphing-4-enine + hexadecanoyl-CoA = N-hexadecanoylsphing-4-enine + CoA + H(+). In terms of biological role, involved in ceramide synthesis. In Homo sapiens (Human), this protein is Ceramide synthase.